The sequence spans 116 residues: Chondroitin proteoglycan 7 (116 aa).

Positions 1-19 are cleaved as a signal peptide; it reads MQTITILALIACVAVPIFA. Positions 29–102 are disordered; it reads DVVESSGEGS…NAVVASDSPK (74 aa). 2 stretches are compositionally biased toward low complexity: residues 32–41 and 48–58; these read ESSGEGSGES and VESSGEGSGES. 5 O-linked (Xyl...) (chondroitin sulfate) serine glycosylation sites follow: S68, S72, S76, S84, and S88.

The chain is Chondroitin proteoglycan 7 from Caenorhabditis elegans.